A 513-amino-acid polypeptide reads, in one-letter code: ATP synthase subunit alpha (513 aa).

169-176 (GDRQTGKT) lines the ATP pocket.

This sequence belongs to the ATPase alpha/beta chains family. As to quaternary structure, F-type ATPases have 2 components, CF(1) - the catalytic core - and CF(0) - the membrane proton channel. CF(1) has five subunits: alpha(3), beta(3), gamma(1), delta(1), epsilon(1). CF(0) has three main subunits: a(1), b(2) and c(9-12). The alpha and beta chains form an alternating ring which encloses part of the gamma chain. CF(1) is attached to CF(0) by a central stalk formed by the gamma and epsilon chains, while a peripheral stalk is formed by the delta and b chains.

It is found in the cell inner membrane. The enzyme catalyses ATP + H2O + 4 H(+)(in) = ADP + phosphate + 5 H(+)(out). In terms of biological role, produces ATP from ADP in the presence of a proton gradient across the membrane. The alpha chain is a regulatory subunit. This chain is ATP synthase subunit alpha, found in Hydrogenovibrio crunogenus (strain DSM 25203 / XCL-2) (Thiomicrospira crunogena).